Reading from the N-terminus, the 377-residue chain is Actin-related protein T2 (377 aa).

This sequence belongs to the actin family.

The protein localises to the cytoplasm. It localises to the cytoskeleton. The sequence is that of Actin-related protein T2 (ACTRT2) from Homo sapiens (Human).